We begin with the raw amino-acid sequence, 281 residues long: 4-diphosphocytidyl-2-C-methyl-D-erythritol kinase (281 aa).

The active site involves lysine 15. 98 to 108 provides a ligand contact to ATP; the sequence is PTGAGLGGGSS. Aspartate 140 is an active-site residue.

Belongs to the GHMP kinase family. IspE subfamily.

The enzyme catalyses 4-CDP-2-C-methyl-D-erythritol + ATP = 4-CDP-2-C-methyl-D-erythritol 2-phosphate + ADP + H(+). Its pathway is isoprenoid biosynthesis; isopentenyl diphosphate biosynthesis via DXP pathway; isopentenyl diphosphate from 1-deoxy-D-xylulose 5-phosphate: step 3/6. Its function is as follows. Catalyzes the phosphorylation of the position 2 hydroxy group of 4-diphosphocytidyl-2C-methyl-D-erythritol. This is 4-diphosphocytidyl-2-C-methyl-D-erythritol kinase from Neisseria meningitidis serogroup C (strain 053442).